A 167-amino-acid polypeptide reads, in one-letter code: Small ribosomal subunit protein uS5 (167 aa).

Residues 12-75 enclose the S5 DRBM domain; the sequence is LEDQVVSINR…DAAKKSLIEV (64 aa).

It belongs to the universal ribosomal protein uS5 family. Part of the 30S ribosomal subunit. Contacts proteins S4 and S8.

With S4 and S12 plays an important role in translational accuracy. Functionally, located at the back of the 30S subunit body where it stabilizes the conformation of the head with respect to the body. The protein is Small ribosomal subunit protein uS5 of Lacticaseibacillus paracasei (strain ATCC 334 / BCRC 17002 / CCUG 31169 / CIP 107868 / KCTC 3260 / NRRL B-441) (Lactobacillus paracasei).